Here is a 548-residue protein sequence, read N- to C-terminus: Asparagine--tRNA ligase, cytoplasmic (548 aa).

Residues 1–25 (MVLAELYVSDREGSDATGDGTKEKP) are disordered. A compositionally biased stretch (basic and acidic residues) spans 8 to 25 (VSDREGSDATGDGTKEKP). A Phosphoserine modification is found at serine 61. The tract at residues 69–91 (MWHREQMKSESREKKEAEDSLRR) is disordered. The span at 71–91 (HREQMKSESREKKEAEDSLRR) shows a compositional bias: basic and acidic residues. An N6-acetyllysine modification is found at lysine 244. Position 482 is a phosphoserine (serine 482). Lysine 490 bears the N6-acetyllysine mark.

This sequence belongs to the class-II aminoacyl-tRNA synthetase family. In terms of assembly, homodimer.

Its subcellular location is the cytoplasm. The catalysed reaction is tRNA(Asn) + L-asparagine + ATP = L-asparaginyl-tRNA(Asn) + AMP + diphosphate + H(+). Catalyzes the attachment of asparagine to tRNA(Asn) in a two-step reaction: asparagine is first activated by ATP to form Asn-AMP and then transferred to the acceptor end of tRNA(Asn). In addition to its essential role in protein synthesis, acts as a signaling molecule that induced migration of CCR3-expressing cells. Has an essential role in the development of the cerebral cortex, being required for proper proliferation of radial glial cells. This chain is Asparagine--tRNA ligase, cytoplasmic, found in Homo sapiens (Human).